Consider the following 334-residue polypeptide: DNA-directed RNA polymerase subunit alpha (334 aa).

Residues 1-232 (MIREKLKVST…DLFIPFLHAE (232 aa)) form an alpha N-terminal domain (alpha-NTD) region. An alpha C-terminal domain (alpha-CTD) region spans residues 267 to 334 (QKEITLKSIF…NILQIENHFV (68 aa)).

Belongs to the RNA polymerase alpha chain family. In plastids the minimal PEP RNA polymerase catalytic core is composed of four subunits: alpha, beta, beta', and beta''. When a (nuclear-encoded) sigma factor is associated with the core the holoenzyme is formed, which can initiate transcription.

It is found in the plastid. It localises to the chloroplast. It catalyses the reaction RNA(n) + a ribonucleoside 5'-triphosphate = RNA(n+1) + diphosphate. DNA-dependent RNA polymerase catalyzes the transcription of DNA into RNA using the four ribonucleoside triphosphates as substrates. This is DNA-directed RNA polymerase subunit alpha from Pisum sativum (Garden pea).